Reading from the N-terminus, the 208-residue chain is Small ribosomal subunit protein uS4 (208 aa).

Positions Thr-95–Glu-159 constitute an S4 RNA-binding domain.

This sequence belongs to the universal ribosomal protein uS4 family. Part of the 30S ribosomal subunit. Contacts protein S5. The interaction surface between S4 and S5 is involved in control of translational fidelity.

Its function is as follows. One of the primary rRNA binding proteins, it binds directly to 16S rRNA where it nucleates assembly of the body of the 30S subunit. In terms of biological role, with S5 and S12 plays an important role in translational accuracy. This Borreliella afzelii (strain PKo) (Borrelia afzelii) protein is Small ribosomal subunit protein uS4.